Here is a 309-residue protein sequence, read N- to C-terminus: Ribosomal RNA large subunit methyltransferase F (309 aa).

Residues 1–21 (MASQHDKKSVQSGLLHPRNPH) are disordered.

Belongs to the methyltransferase superfamily. METTL16/RlmF family.

It is found in the cytoplasm. It catalyses the reaction adenosine(1618) in 23S rRNA + S-adenosyl-L-methionine = N(6)-methyladenosine(1618) in 23S rRNA + S-adenosyl-L-homocysteine + H(+). Functionally, specifically methylates the adenine in position 1618 of 23S rRNA. The polypeptide is Ribosomal RNA large subunit methyltransferase F (Desulfotalea psychrophila (strain LSv54 / DSM 12343)).